The sequence spans 1417 residues: Non-structural polyprotein 1AB (1417 aa).

Residues 105 to 143 are a coiled coil; it reads KLIHKANALQERLRLSQEEKATLALDVQFLQHENVRLKE. 5 helical membrane passes run 155-175, 240-260, 287-307, 314-334, and 345-365; these read MKWI…GGYA, VFYY…LAIG, VLPT…TLMV, LLAI…LCFM, and GLIA…LTGT. Residues histidine 462, aspartate 490, and serine 552 each act as charge relay system; for serine protease activity in the active site. The stretch at 588 to 615 forms a coiled coil; sequence VKAPSQVELLKEEIERLKAQLNSAAENP. Tyrosine 694 carries the O-(5'-phospho-RNA)-tyrosine modification. Residues 753-813 form a disordered region; it reads NFDQAKPTPA…QKIEPQPYSQ (61 aa). Residues 784-796 show a composition bias toward basic and acidic residues; sequence SQKKEKQPEHEQQ. In terms of domain architecture, RdRp catalytic spans 1162–1288; the sequence is KHFIEFDWTR…TTPSVPDNYE (127 aa).

Belongs to the astroviridae polyprotein 1AB family. As to quaternary structure, monomer. Cleaved by the viral and host proteases. The protease is probably autocatalytically cleaved.

Its subcellular location is the host membrane. The catalysed reaction is RNA(n) + a ribonucleoside 5'-triphosphate = RNA(n+1) + diphosphate. Its function is as follows. Responsible for the cleavage of the polyprotein into functional products. Functionally, protein covalently attached to the 5' extremity of the genomic and subgenomic RNAs. It may serve as a primer for the replicase. The chain is Non-structural polyprotein 1AB (ORF1) from Human astrovirus-8 (HAstV-8).